A 243-amino-acid polypeptide reads, in one-letter code: Collagen triple helix repeat-containing protein 1 (243 aa).

Residues 1–30 form the signal peptide; sequence MRPQGPAASPQRLRGLLLLLLLQLPAPSSA. The Collagen-like domain occupies 57-90; sequence QGPAGVPGRDGSPGANGIPGTPGIPGRDGFKGEK. The disordered stretch occupies residues 62–85; it reads VPGRDGSPGANGIPGTPGIPGRDG. Asn186 is a glycosylation site (N-linked (GlcNAc...) asparagine).

N-glycosylated. As to expression, isoform 1 is expressed in calcified atherosclerotic plaque and chondrocyte-like cells.

The protein localises to the secreted. The protein resides in the extracellular space. It is found in the extracellular matrix. Its function is as follows. May act as a negative regulator of collagen matrix deposition. This is Collagen triple helix repeat-containing protein 1 (CTHRC1) from Homo sapiens (Human).